The following is a 384-amino-acid chain: Prokineticin receptor 2 (384 aa).

Residues 1–53 (MAAQNGNASFPANFSIPQEHASSLPFNFSYDDYDLPLDEDEDMTKTQTFFAAK) lie on the Extracellular side of the membrane. Residues asparagine 7, asparagine 13, and asparagine 27 are each glycosylated (N-linked (GlcNAc...) asparagine). Residues 54-74 (IVIGVALVGIMLTCGIGNFVF) form a helical membrane-spanning segment. The Cytoplasmic segment spans residues 75-89 (ITALTRYKKLRNLTN). A helical transmembrane segment spans residues 90–110 (LLIANLAISDFLVAIICCPFE). The Extracellular portion of the chain corresponds to 111-137 (MDYYVVHQLSWEHGHVLCACINYLRTV). Residues cysteine 128 and cysteine 208 are joined by a disulfide bond. Residues 138–158 (SLYVSTNALLAIAIDRYLAIV) traverse the membrane as a helical segment. Topologically, residues 159 to 171 (HPLKPRMNYQTAS) are cytoplasmic. A helical transmembrane segment spans residues 172-192 (FLIALVWMVSILISIPSAYFT). Residues 193 to 223 (KETVLFIVKNQKKIFCGQVWPVDQQLYYKSY) lie on the Extracellular side of the membrane. A helical membrane pass occupies residues 224–244 (FLFVFGIEFLGPVFTMTLCYA). Over 245–273 (RISRELWFKAVPGFQTEQIRKRLRCRRKT) the chain is Cytoplasmic. The chain crosses the membrane as a helical span at residues 274 to 294 (VLVLMCILTAYVLCWAPFYGF). Topologically, residues 295 to 313 (TIVRDFFPTVFVKEKHYLT) are extracellular. The chain crosses the membrane as a helical span at residues 314-334 (AFYVVECIAMSNSMINTVCFV). Residues 335 to 384 (TVKNSTMKYFKKMLLLHWRPSHHGSKSSADLDLKTSRLPATEEVDCIRLK) are Cytoplasmic-facing.

This sequence belongs to the G-protein coupled receptor 1 family. As to quaternary structure, homodimer.

The protein localises to the cell membrane. Functionally, receptor for prokineticin 2. Exclusively coupled to the G(q) subclass of heteromeric G proteins. Activation leads to mobilization of calcium, stimulation of phosphoinositide turnover and activation of p44/p42 mitogen-activated protein kinase. The chain is Prokineticin receptor 2 (PROKR2) from Bos taurus (Bovine).